The primary structure comprises 604 residues: UvrABC system protein C (604 aa).

The region spanning 13 to 92 (ASPGVYLMKD…IKKYHPKYNV (80 aa)) is the GIY-YIG domain. The UVR domain occupies 205–240 (SEIVQDLEKSIEKASKEQKFEQAGMYYRTLKLIQQA).

This sequence belongs to the UvrC family. In terms of assembly, interacts with UvrB in an incision complex.

It is found in the cytoplasm. Functionally, the UvrABC repair system catalyzes the recognition and processing of DNA lesions. UvrC both incises the 5' and 3' sides of the lesion. The N-terminal half is responsible for the 3' incision and the C-terminal half is responsible for the 5' incision. In Chlamydia abortus (strain DSM 27085 / S26/3) (Chlamydophila abortus), this protein is UvrABC system protein C.